The primary structure comprises 405 residues: DNA polymerase IV 1 (405 aa).

In terms of domain architecture, UmuC spans 23–203; it reads IAHIDCDAFY…RPVTTIWGVG (181 aa). Positions 27 and 120 each coordinate Mg(2+). Glutamate 121 is a catalytic residue.

Belongs to the DNA polymerase type-Y family. Monomer. Mg(2+) serves as cofactor.

It localises to the cytoplasm. The catalysed reaction is DNA(n) + a 2'-deoxyribonucleoside 5'-triphosphate = DNA(n+1) + diphosphate. Poorly processive, error-prone DNA polymerase involved in untargeted mutagenesis. Copies undamaged DNA at stalled replication forks, which arise in vivo from mismatched or misaligned primer ends. These misaligned primers can be extended by PolIV. Exhibits no 3'-5' exonuclease (proofreading) activity. May be involved in translesional synthesis, in conjunction with the beta clamp from PolIII. The chain is DNA polymerase IV 1 (dinB1) from Agrobacterium fabrum (strain C58 / ATCC 33970) (Agrobacterium tumefaciens (strain C58)).